Reading from the N-terminus, the 187-residue chain is MNLQHHFLIAMPALQDPIFRRSVVYICEHNTNGAMGIIVNKPLENLKIEGILEKLKITPEPRDESIRLDKPVMLGGPLAEDRGFILHTPPSNFASSIRISDNTVMTTSRDVLETLGTDKQPSDVLVALGYASWEKGQLEQEILDNAWLTAPADLNILFKTPIADRWREAAKLIGVDILTMPGVAGHA.

Belongs to the UPF0301 (AlgH) family.

This Escherichia coli O139:H28 (strain E24377A / ETEC) protein is UPF0301 protein YqgE.